Consider the following 246-residue polypeptide: MTTGDCCHLPGSLCDCSSSPAFSKVVEATGLGPPQYVAQVTSRDGRLLSTVIRALDSQSDCPFCRICHEGANGENLLSPCGCTGTLGAVHKSCLEKWLSSSNTSYCELCHTEFAVEKRPRPLTEWLKDPGPRTEKRTLCCDMVCFVFITPLAAISGWLCLRGAQDHLRLHSRLEAVGLIALTIALFTIYVLWTLVSFRYHCQLYSEWRKTNQKVRLKIREADGSEDPHHSLLATGLLKKVAEETPV.

The segment at 56 to 116 (DSQSDCPFCR…ELCHTEFAVE (61 aa)) adopts an RING-CH-type zinc-finger fold. Positions 64, 67, 80, 82, 90, 93, 106, and 109 each coordinate Zn(2+). The segment at 121 to 246 (PLTEWLKDPG…LKKVAEETPV (126 aa)) is required for interaction with IKBKG. 2 helical membrane-spanning segments follow: residues 138–158 (LCCD…SGWL) and 175–195 (AVGL…WTLV).

In terms of assembly, interacts with STX6; the interaction promotes MARCHF2-mediated ubiquitination and degradation of CFTR. Interacts with MARCHF3. Interacts with GOPC/CAL; the interaction leads to CFTR ubiquitination and degradation. Interacts with CFTR; the interaction leads to CFTR ubiqtuitination and degradation. Interacts (via PDZ domain) with DLG1 (via PDZ domains); the interaction leads to DLG1 ubiqtuitination and degradation. Interacts with ERGIC3. Interacts with ADRB2. Interacts with IKBKG/NEMO; during the late stages of macrophage viral and bacterial infection; the interaction leads to ubiquitination and degradation of IKBKG/NEMO.

Its subcellular location is the endoplasmic reticulum membrane. The protein resides in the lysosome membrane. The protein localises to the endosome membrane. It is found in the golgi apparatus membrane. It localises to the cytoplasm. Its subcellular location is the cell membrane. The enzyme catalyses S-ubiquitinyl-[E2 ubiquitin-conjugating enzyme]-L-cysteine + [acceptor protein]-L-lysine = [E2 ubiquitin-conjugating enzyme]-L-cysteine + N(6)-ubiquitinyl-[acceptor protein]-L-lysine.. It participates in protein modification; protein ubiquitination. In terms of biological role, E3 ubiquitin-protein ligase that may mediate ubiquitination of TFRC and CD86, and promote their subsequent endocytosis and sorting to lysosomes via multivesicular bodies. E3 ubiquitin ligases accept ubiquitin from an E2 ubiquitin-conjugating enzyme in the form of a thioester and then directly transfer the ubiquitin to targeted substrates. Together with GOPC/CAL mediates the ubiquitination and lysosomal degradation of CFTR. Ubiquitinates and therefore mediates the degradation of DLG1. Regulates the intracellular trafficking and secretion of alpha1-antitrypsin/SERPINA1 and HP/haptoglobin via ubiquitination and degradation of the cargo receptor ERGIC3. Negatively regulates the antiviral and antibacterial immune response by repression of the NF-kB and type 1 IFN signaling pathways, via MARCHF2-mediated K48-linked polyubiquitination of IKBKG/NEMO, resulting in its proteasomal degradation. May be involved in endosomal trafficking through interaction with STX6. The polypeptide is E3 ubiquitin-protein ligase MARCHF2 (Marchf2) (Mus musculus (Mouse)).